Consider the following 801-residue polypeptide: Phosphorus acquisition-controlling protein (801 aa).

Disordered stretches follow at residues 292 to 317 (GSSPREMELEPPAMSQASVSPGDLAR), 366 to 607 (APSQ…SAGA), 628 to 725 (NTVP…ASTV), and 756 to 801 (MKMQ…AMDE). A compositionally biased stretch (low complexity) spans 374-386 (PLTPLIPTSSSST). Polar residues-rich tracts occupy residues 387–401 (AGVTDSENGSISPEN) and 459–472 (KLSSPSNRNPSVVG). Positions 446-540 (PGIASPATPA…PPSPAVAKPL (95 aa)) are interaction with negative regulatory factor. Residues 477–486 (DPMDPDHIEN) are compositionally biased toward basic and acidic residues. The span at 535–554 (AVAKPLALPSAALSSPQLKP) shows a compositional bias: low complexity. A compositionally biased stretch (polar residues) spans 637 to 646 (SELSTNLTSK). One can recognise a bHLH domain in the interval 645–735 (SKRTSHKIAE…EMAIEYIKQL (91 aa)). Residues 676–687 (PAKEGGDGDGDG) are compositionally biased toward basic and acidic residues. A compositionally biased stretch (gly residues) spans 690–699 (SSGGGGGSGG). A compositionally biased stretch (basic and acidic residues) spans 700-713 (ADREDKREKDKDKA). The segment covering 765-777 (GSGSSVGDAGDLG) has biased composition (low complexity).

In terms of assembly, binds DNA as a dimer.

Its subcellular location is the nucleus. Factor that activates the transcription of structural genes for phosphorus acquisition. The protein is Phosphorus acquisition-controlling protein (nuc-1) of Neurospora crassa (strain ATCC 24698 / 74-OR23-1A / CBS 708.71 / DSM 1257 / FGSC 987).